The sequence spans 300 residues: Tyrosine recombinase XerC (300 aa).

The 86-residue stretch at 2–87 (TSLSPLLEKF…SIKSFYKYLV (86 aa)) folds into the Core-binding (CB) domain. The 187-residue stretch at 108-294 (TLPKVLPVEE…TWEQLQQVYD (187 aa)) folds into the Tyr recombinase domain. Residues Arg148, Lys172, His246, Arg249, and His272 contribute to the active site. Tyr281 acts as the O-(3'-phospho-DNA)-tyrosine intermediate in catalysis.

It belongs to the 'phage' integrase family. XerC subfamily. Forms a cyclic heterotetrameric complex composed of two molecules of XerC and two molecules of XerD.

It localises to the cytoplasm. In terms of biological role, site-specific tyrosine recombinase, which acts by catalyzing the cutting and rejoining of the recombining DNA molecules. The XerC-XerD complex is essential to convert dimers of the bacterial chromosome into monomers to permit their segregation at cell division. It also contributes to the segregational stability of plasmids. In Myxococcus xanthus, this protein is Tyrosine recombinase XerC.